We begin with the raw amino-acid sequence, 339 residues long: Cyclin-Y-like protein 1-A (339 aa).

Polar residues predominate over residues methionine 1–serine 13. Residues methionine 1–glutamine 42 are disordered. Residues serine 14 to threonine 24 show a composition bias toward basic and acidic residues. Residues aspartate 141–asparagine 263 enclose the Cyclin N-terminal domain.

The protein belongs to the cyclin family. Cyclin Y subfamily.

This chain is Cyclin-Y-like protein 1-A (ccnyl1-a), found in Xenopus laevis (African clawed frog).